We begin with the raw amino-acid sequence, 465 residues long: WAS protein family homolog 2 (465 aa).

The tract at residues 1-54 (MTPVRMQHSLAGQTYAVPLIQPDLRREEAVQQMADALQYLQKVSGDIFSRISQQ) is required for WASH complex assembly. Residues 1–167 (MTPVRMQHSL…EGLGGLPSNI (167 aa)) form a WHD1 region. Residue lysine 220 forms a Glycyl lysine isopeptide (Lys-Gly) (interchain with G-Cter in ubiquitin) linkage. 2 disordered regions span residues 297-407 (QDGV…QGGH) and 422-465 (GISG…DWES). Positions 302-314 (TPPPPPPPPPPAP) are enriched in pro residues. The interval 349–465 (QGAPREVVDP…AEEDEDDWES (117 aa)) is VCA. Positions 361 to 383 (GRATLLESIRQAGGIGKAKLRSM) constitute a WH2 domain. A compositionally biased stretch (basic and acidic residues) spans 382 to 398 (SMKERKLEKKKQKEQEQ). Gly residues predominate over residues 424-436 (SGKGPGAGEGPGG). Residues 456–465 (AEEDEDDWES) are compositionally biased toward acidic residues.

This sequence belongs to the WASH1 family. Component of the WASH core complex also described as WASH regulatory complex (SHRC) composed of WASH (WASHC1, WASH2P or WASH3P), WASHC2 (WASHC2A or WASHC2C), WASHC3, WASHC4 and WASHC5. The WASH core complex associates with the F-actin-capping protein dimer (formed by CAPZA1, CAPZA2 or CAPZA3 and CAPZB) in a transient or substoichiometric manner which was initially described as WASH complex. Interacts (via WHD1 region) with WASHC2C; the interaction is direct. Interacts with alpha-tubulin. Interacts with BECN1; WASHC1 and AMBRA1 can competitively interact with BECN1. Interacts with BLOC1S2; may associate with the BLOC-1 complex. Interacts with tubulin gamma chain (TUBG1 or TUBG2). Interacts with EXOC1, EXOC4, EXOC8; in MMP14-positive endosomes in breast tumor cells; indicative for an association with the exocyst complex.

It is found in the early endosome membrane. It localises to the recycling endosome membrane. The protein localises to the late endosome. Its subcellular location is the cytoplasmic vesicle. The protein resides in the autophagosome. It is found in the cytoplasm. It localises to the cytoskeleton. The protein localises to the microtubule organizing center. Its subcellular location is the centrosome. The protein resides in the centriole. Its function is as follows. Acts as a nucleation-promoting factor at the surface of endosomes, where it recruits and activates the Arp2/3 complex to induce actin polymerization, playing a key role in the fission of tubules that serve as transport intermediates during endosome sorting. Involved in endocytic trafficking of EGF. Involved in transferrin receptor recycling. Regulates the trafficking of endosomal alpha5beta1 integrin to the plasma membrane and involved in invasive cell migration. In T-cells involved in endosome-to-membrane recycling of receptors including T-cell receptor (TCR), CD28 and ITGAL; proposed to be implicated in T-cell proliferation and effector function. In dendritic cells involved in endosome-to-membrane recycling of major histocompatibility complex (MHC) class II probably involving retromer and subsequently allowing antigen sampling, loading and presentation during T-cell activation. Involved in Arp2/3 complex-dependent actin assembly driving Salmonella typhimurium invasion independent of ruffling. Involved in the exocytosis of MMP14 leading to matrix remodeling during invasive migration and implicating late endosome-to-plasma membrane tubular connections and cooperation with the exocyst complex. Involved in negative regulation of autophagy independently from its role in endosomal sorting by inhibiting BECN1 ubiquitination to inactivate PIK3C3/Vps34 activity. The polypeptide is WAS protein family homolog 2 (WASH2P) (Homo sapiens (Human)).